Here is a 105-residue protein sequence, read N- to C-terminus: uncharacterized protein (105 aa).

The chain crosses the membrane as a helical span at residues 64–84 (ILLISIFFLLLFALPQHTMGI).

It is found in the membrane. This is an uncharacterized protein from Saccharomyces cerevisiae (strain ATCC 204508 / S288c) (Baker's yeast).